The chain runs to 222 residues: MRSRKLTGGVRSSARLRARSCSSTSLASAGDIASSTSAKTTCLASSSHKATDRRTSKKFKYDKGHLLKAELQKVDPKSDISSLPKVVPVAPCENKFAEDGAEAAVPAPENTAPPQGCSKPVSEEPSVKAEEGLPTAPRSAAAAQETHDSSASQAEPVPVLQMDSSVFLDDDSNQPMPVSRFFGNVELMQDLPPASSSCPSMSRREFRKMHFRAKDDDEDAEG.

Disordered regions lie at residues 23 to 57 and 98 to 158; these read STSLASAGDIASSTSAKTTCLASSSHKATDRRTSK and EDGA…EPVP. Residues 33 to 48 show a composition bias toward polar residues; that stretch reads ASSTSAKTTCLASSSH. Residues 121-131 are compositionally biased toward basic and acidic residues; the sequence is VSEEPSVKAEE. Residue serine 172 is modified to Phosphoserine.

This sequence belongs to the UPF0688 family.

Its subcellular location is the nucleus. In Rattus norvegicus (Rat), this protein is UPF0688 protein C1orf174 homolog.